Reading from the N-terminus, the 554-residue chain is Glutamine--tRNA ligase (554 aa).

Positions 34 to 44 match the 'HIGH' region motif; the sequence is PEPNGYLHIGH. Residues 35–37 and 41–47 contribute to the ATP site; these read EPN and HIGHAKS. Asp67 and Tyr212 together coordinate L-glutamine. ATP-binding positions include Thr231, 261 to 262, and 269 to 271; these read RL and MSK. A 'KMSKS' region motif is present at residues 268-272; it reads VMSKR. The interaction with tRNA stretch occupies residues 317–324; sequence TKQDNTIE.

Belongs to the class-I aminoacyl-tRNA synthetase family. In terms of assembly, monomer.

It localises to the cytoplasm. It carries out the reaction tRNA(Gln) + L-glutamine + ATP = L-glutaminyl-tRNA(Gln) + AMP + diphosphate. In Escherichia coli O127:H6 (strain E2348/69 / EPEC), this protein is Glutamine--tRNA ligase.